Consider the following 235-residue polypeptide: Small ribosomal subunit protein uS5 (235 aa).

Residues 60–123 (ENQEVLDIAL…NYAKMNIIEI (64 aa)) form the S5 DRBM domain. Residues Cys-127, Cys-132, Cys-134, and His-138 each contribute to the Zn(2+) site.

It belongs to the universal ribosomal protein uS5 family. As to quaternary structure, part of the 30S ribosomal subunit. Contacts protein S4. Zn(2+) is required as a cofactor.

Functionally, with S4 and S12 plays an important role in translational accuracy. This is Small ribosomal subunit protein uS5 from Thermococcus kodakarensis (strain ATCC BAA-918 / JCM 12380 / KOD1) (Pyrococcus kodakaraensis (strain KOD1)).